Here is a 382-residue protein sequence, read N- to C-terminus: Serine/arginine-rich splicing factor SR45a (382 aa).

4 stretches are compositionally biased toward low complexity: residues 30–45 (PMSYSRRSRYSPSLSP), 54–68 (VSRSLSRSPTRSVSS), 177–195 (PSYSPRRSVSCSRSRSRSY), and 202–219 (SYSPSYGRRGRSSSYSPF). 2 disordered regions span residues 30-76 (PMSY…PGNS) and 150-382 (KARR…SVSP). Residues 288 to 316 (RARDRSCSPYYRGRDRSYSPHYQGRDRSY) are compositionally biased toward basic and acidic residues. Positions 329–343 (VSGSVSPGGRSMSRS) are enriched in low complexity. Residues 345-361 (SPRKGRKESRSKSRRHD) are compositionally biased toward basic residues. The span at 364–382 (SSMCHSRSARSSTSRSVSP) shows a compositional bias: low complexity.

This sequence belongs to the splicing factor SR family. SR45 subfamily. Component of the spliceosome. Homodimer. Interacts with PRP38, SCL28, SR45, RNU1 and U2AF35B. In terms of processing, phosphorylated. As to expression, expressed in leaves, stems and roots.

Its subcellular location is the nucleus speckle. In terms of biological role, probable splicing factor involved in constitutive and/or alternative splicing events. May bridge the 5' and 3' components of the spliceosome. This is Serine/arginine-rich splicing factor SR45a (SR45A) from Arabidopsis thaliana (Mouse-ear cress).